The sequence spans 493 residues: Farnesoate epoxidase (493 aa).

A signal peptide spans Met1 to Cys24. A heme-binding site is contributed by Cys433.

This sequence belongs to the cytochrome P450 family. Heme serves as cofactor. In terms of tissue distribution, constitutively expressed in corpora allata from the first instar larval to adult stages.

The enzyme catalyses (2E,6E)-farnesoate + reduced [NADPH--hemoprotein reductase] + O2 = juvenile hormone III carboxylate + oxidized [NADPH--hemoprotein reductase] + H2O + H(+). Catalyzes the conversion of farnesoate to juvenile hormone III acid in juvenile hormone biosynthesis. In Bombyx mori (Silk moth), this protein is Farnesoate epoxidase.